The following is a 238-amino-acid chain: Large ribosomal subunit protein uL3 (238 aa).

Disordered stretches follow at residues 140–164 (SHRS…KMPG) and 212–238 (LPKE…QEGA). Glutamine 151 carries the post-translational modification N5-methylglutamine. Positions 225–238 (AGGEAEAAAQQEGA) are enriched in low complexity.

Belongs to the universal ribosomal protein uL3 family. Part of the 50S ribosomal subunit. Forms a cluster with proteins L14 and L19. Post-translationally, methylated by PrmB.

Functionally, one of the primary rRNA binding proteins, it binds directly near the 3'-end of the 23S rRNA, where it nucleates assembly of the 50S subunit. This Bradyrhizobium diazoefficiens (strain JCM 10833 / BCRC 13528 / IAM 13628 / NBRC 14792 / USDA 110) protein is Large ribosomal subunit protein uL3.